The primary structure comprises 392 residues: NADH-quinone oxidoreductase subunit D 1 (392 aa).

Belongs to the complex I 49 kDa subunit family. NDH-1 is composed of 14 different subunits. Subunits NuoB, C, D, E, F, and G constitute the peripheral sector of the complex.

The protein resides in the cell inner membrane. It catalyses the reaction a quinone + NADH + 5 H(+)(in) = a quinol + NAD(+) + 4 H(+)(out). NDH-1 shuttles electrons from NADH, via FMN and iron-sulfur (Fe-S) centers, to quinones in the respiratory chain. The immediate electron acceptor for the enzyme in this species is believed to be a menaquinone. Couples the redox reaction to proton translocation (for every two electrons transferred, four hydrogen ions are translocated across the cytoplasmic membrane), and thus conserves the redox energy in a proton gradient. This Cytophaga hutchinsonii (strain ATCC 33406 / DSM 1761 / CIP 103989 / NBRC 15051 / NCIMB 9469 / D465) protein is NADH-quinone oxidoreductase subunit D 1.